The chain runs to 310 residues: Cytochrome f (310 aa).

Positions 1–27 (MRRILTFFLGSIIIGLSIIISPSSSFA) are cleaved as a signal peptide. Residues Tyr28, Cys48, Cys51, and His52 each coordinate heme. A helical membrane pass occupies residues 277–297 (VIGLIAFFAGVALTQILLVLK).

The protein belongs to the cytochrome f family. The 4 large subunits of the cytochrome b6-f complex are cytochrome b6, subunit IV (17 kDa polypeptide, PetD), cytochrome f and the Rieske protein, while the 4 small subunits are PetG, PetL, PetM and PetN. The complex functions as a dimer. Heme is required as a cofactor.

It localises to the cellular thylakoid membrane. Functionally, component of the cytochrome b6-f complex, which mediates electron transfer between photosystem II (PSII) and photosystem I (PSI), cyclic electron flow around PSI, and state transitions. This Prochlorococcus marinus (strain SARG / CCMP1375 / SS120) protein is Cytochrome f.